A 157-amino-acid polypeptide reads, in one-letter code: MITCLPLLAGEGARRKGDIGMRNKNKRLAQYATELRRNMTDAEYALWYHLRNKLFCGIRFNRQVIIGHYIVDFCSRKLKLVIELDGIQHVEQEQYDLERTKFLTAQGYKVIRFWNDEVLKNIDNVLEAIYVEIEHLSPPHFGSSPHKWVEPRLEVLK.

This sequence to E.coli YcjD and H.influenzae HI_0925.

This is an uncharacterized protein from Haemophilus influenzae (strain ATCC 51907 / DSM 11121 / KW20 / Rd).